A 333-amino-acid polypeptide reads, in one-letter code: Leucine carboxyl methyltransferase 1 (333 aa).

Residues R79, G108, D131, 180–181, and E206 contribute to the S-adenosyl-L-methionine site; that span reads NV.

It belongs to the methyltransferase superfamily. LCMT family.

It catalyses the reaction [phosphatase 2A protein]-C-terminal L-leucine + S-adenosyl-L-methionine = [phosphatase 2A protein]-C-terminal L-leucine methyl ester + S-adenosyl-L-homocysteine. Methylates the carboxyl group of the C-terminal leucine residue of protein phosphatase 2A catalytic subunits to form alpha-leucine ester residues. This Kluyveromyces lactis (strain ATCC 8585 / CBS 2359 / DSM 70799 / NBRC 1267 / NRRL Y-1140 / WM37) (Yeast) protein is Leucine carboxyl methyltransferase 1 (PPM1).